Consider the following 359-residue polypeptide: MDSINNKSIRVAVIGASGYGGIQSIRLLKEHPDFEISFLGGYKTAGLKWNDLCPFLPLENDPTINAVDLSEITDKSDIVLLSLPNGISSQLTPKLIKEKVRVVDLSADYRYRSLEEWKSIYSVESSKHSRKDELLCSQAVYGIPEWNSIEISKAKIVACPGCFPTASLLPLMPFLKQGIIETDGIIIDSKSGTSGGGRVPKEHLLLAESSESVEPYSVVGHRHTSEIEQELSNLSGSNIQIQFTPHLVPMVRGLLSTVYARLRDPCLTAEDCKTVLETVYRSCPSVEIQPVGVYPKTKWVRFTNKALISVQVDQRNGRVILMSAIDNLIKGQAGQAIQSLNLMSGLPTCKGLPLIGYYP.

Cysteine 162 is an active-site residue.

The protein belongs to the NAGSA dehydrogenase family. Type 1 subfamily.

The protein resides in the cytoplasm. The enzyme catalyses N-acetyl-L-glutamate 5-semialdehyde + phosphate + NADP(+) = N-acetyl-L-glutamyl 5-phosphate + NADPH + H(+). It functions in the pathway amino-acid biosynthesis; L-arginine biosynthesis; N(2)-acetyl-L-ornithine from L-glutamate: step 3/4. Functionally, catalyzes the NADPH-dependent reduction of N-acetyl-5-glutamyl phosphate to yield N-acetyl-L-glutamate 5-semialdehyde. The protein is N-acetyl-gamma-glutamyl-phosphate reductase of Prochlorococcus marinus (strain SARG / CCMP1375 / SS120).